The chain runs to 359 residues: MPSLLLLFTAALLSSWAQLLTDANSWWSLALNPVQRPEMFIIGAQPVCSQLPGLSPGQRKLCQLYQEHMAYIGEGAKTGIKECQHQFRQRRWNCSTADNASVFGRVMQIGSRETAFTHAVSAAGVVNAISRACREGELSTCGCSRTARPKDLPRDWLWGGCGDNVEYGYRFAKEFVDAREREKNFAKGSEEQGRVLMNLQNNEAGRRAVYKMADVACKCHGVSGSCSLKTCWLQLAEFRKVGDRLKEKYDSAAAMRVTRKGRLELVNSRFTQPTPEDLVYVDPSPDYCLRNESTGSLGTQGRLCNKTSEGMDGCELMCCGRGYNQFKSVQVERCHCKFHWCCFVRCKKCTEIVDQYICK.

Positions 1 to 17 (MPSLLLLFTAALLSSWA) are cleaved as a signal peptide. A disulfide bridge links C83 with C94. Residues N93 and N99 are each glycosylated (N-linked (GlcNAc...) asparagine). Intrachain disulfides connect C133–C141, C143–C161, C217–C231, C219–C226, C288–C319, C304–C314, C318–C358, C334–C349, C336–C346, and C341–C342. S223 carries O-palmitoleoyl serine; by PORCN lipidation. N-linked (GlcNAc...) asparagine glycans are attached at residues N291 and N305.

This sequence belongs to the Wnt family. As to quaternary structure, interacts with PORCN. Post-translationally, palmitoleoylation is required for efficient binding to frizzled receptors. Depalmitoleoylation leads to Wnt signaling pathway inhibition.

The protein localises to the secreted. Its subcellular location is the extracellular space. It localises to the extracellular matrix. Ligand for members of the frizzled family of seven transmembrane receptors. Probable developmental protein. May be a signaling molecule which affects the development of discrete regions of tissues. Is likely to signal over only few cell diameters. This is Protein Wnt-5b (WNT5B) from Homo sapiens (Human).